Here is a 172-residue protein sequence, read N- to C-terminus: Adenine phosphoribosyltransferase (172 aa).

The protein belongs to the purine/pyrimidine phosphoribosyltransferase family. In terms of assembly, homodimer.

Its subcellular location is the cytoplasm. It carries out the reaction AMP + diphosphate = 5-phospho-alpha-D-ribose 1-diphosphate + adenine. It participates in purine metabolism; AMP biosynthesis via salvage pathway; AMP from adenine: step 1/1. Catalyzes a salvage reaction resulting in the formation of AMP, that is energically less costly than de novo synthesis. This Streptococcus thermophilus (strain ATCC BAA-250 / LMG 18311) protein is Adenine phosphoribosyltransferase.